The sequence spans 1002 residues: Chitin synthase II (1002 aa).

Disordered regions lie at residues 1–165 (MDRP…GRTS) and 178–209 (LDGSDDVFGPETDLSDSRPLPTHRDSFMSGSQ). The span at 63–78 (SYQPSVVSSHSRSASV) shows a compositional bias: low complexity. Asn-123 carries an N-linked (GlcNAc...) asparagine glycan. Residue Asn-336 is glycosylated (N-linked (GlcNAc...) asparagine). A run of 8 helical transmembrane segments spans residues 627 to 647 (WLNGAFFAAVYSLVQFRQILA), 669 to 689 (LLFTYFSLANFYLTFYFVAGG), 704 to 724 (SVIFTILRYTCVLLIATQFIL), 740 to 760 (SMIIYGVIMTYTSFACIYIVV), 780 to 800 (LIVSMASTIGLYFVMSFLYLE), 808 to 828 (SLQYFLLLPSYICTLQVYAFC), 906 to 926 (YMVVTWMIANGILAMAVSEIY), and 940 to 960 (ILWAVASLAIFRALGSTTFAI).

This sequence belongs to the chitin synthase family. Class II subfamily. Expressed in hyphal bodies.

It is found in the cell membrane. It carries out the reaction [(1-&gt;4)-N-acetyl-beta-D-glucosaminyl](n) + UDP-N-acetyl-alpha-D-glucosamine = [(1-&gt;4)-N-acetyl-beta-D-glucosaminyl](n+1) + UDP + H(+). Polymerizes chitin, a structural polymer of the cell wall and septum, by transferring the sugar moiety of UDP-GlcNAc to the non-reducing end of the growing chitin polymer. Contributes to the production of conidia and the ability of fungal conidia to germinate. Involved in fungal stress tolerances. This Metarhizium acridum (strain CQMa 102) protein is Chitin synthase II.